The primary structure comprises 49 residues: Large ribosomal subunit protein bL33A (49 aa).

It belongs to the bacterial ribosomal protein bL33 family.

This is Large ribosomal subunit protein bL33A from Latilactobacillus sakei subsp. sakei (strain 23K) (Lactobacillus sakei subsp. sakei).